We begin with the raw amino-acid sequence, 20 residues long: Endo-1,6-beta-glucanase (20 aa).

It belongs to the glycosyl hydrolase 5 (cellulase A) family.

The protein resides in the secreted. It is found in the extracellular space. The enzyme catalyses Random hydrolysis of (1-&gt;6)-linkages in (1-&gt;6)-beta-D-glucans.. In terms of biological role, endo-1,6-beta-glucanase that has highest activity against the beta-1,6-glucan pustulan. Also active against the beta-1,6-glucan lutean. Lower activity against laminarin (beta-1,3-glucan with beta-1,6-branches). Little or no activity against gentiobiose, yeast glucan, lichenin, scleroglucan, curdlan, barley glucan, CM cellulose, HE cellulose, pachyman and pullulan. The sequence is that of Endo-1,6-beta-glucanase from Acremonium sp.